A 250-amino-acid chain; its full sequence is MSSEEDKITRISIEPEKQTLLDHHTEKHFTAGEIVRDIIIGVSDGLTVPFALAAGLSGANASSSIVLTAGIAEVAAGAISMGLGGYLAAKSEEDHYAREMKREQEEIVAVPETEAAEVAEILAQYGIEPHEYSPVVNALRKNPQAWLDFMMRFELGLEKPDPKRALQSAFTIAIAYVLGGFIPLLPYMLIPHAMDAVVASVVITLFALFIFGYAKGHFTGSKPLRSAFETAFIGAIASAAAFCLAKVVQH.

The Cytoplasmic portion of the chain corresponds to 1–37; that stretch reads MSSEEDKITRISIEPEKQTLLDHHTEKHFTAGEIVRD. Residues 38-58 traverse the membrane as a helical segment; sequence IIIGVSDGLTVPFALAAGLSG. Residues 59 to 64 are Vacuolar-facing; it reads ANASSS. A helical membrane pass occupies residues 65-85; the sequence is IVLTAGIAEVAAGAISMGLGG. The Cytoplasmic segment spans residues 86–169; the sequence is YLAAKSEEDH…PDPKRALQSA (84 aa). A cytoplasmic metal binding domain (MBD) region spans residues 91-166; the sequence is SEEDHYAREM…LEKPDPKRAL (76 aa). The Fe cation site is built by E103, E106, E114, E117, M150, and E154. Residues 170 to 190 traverse the membrane as a helical segment; the sequence is FTIAIAYVLGGFIPLLPYMLI. Residues 191–192 are Vacuolar-facing; the sequence is PH. The helical transmembrane segment at 193 to 213 threads the bilayer; sequence AMDAVVASVVITLFALFIFGY. Topologically, residues 214–227 are cytoplasmic; it reads AKGHFTGSKPLRSA. A helical transmembrane segment spans residues 228 to 248; sequence FETAFIGAIASAAAFCLAKVV. At 249 to 250 the chain is on the vacuolar side; the sequence is QH.

Belongs to the CCC1 family. As to quaternary structure, homodimer. The dimeric interaction is mediated by both the transmembrane domains (TMDs) and the cytoplasmic metal binding domain (MBD). As to expression, highly expressed in developing embryo and seed. Expressed in young seedlings, predominantly in the vasculature.

The protein resides in the vacuole membrane. It catalyses the reaction Fe(2+)(in) = Fe(2+)(out). Functionally, vacuolar iron transporter involved in the transfer of iron ions from the cytosol to the vacuole for intracellular iron storage. Involved in regulation of cellular iron homeostasis. Vacuolar iron storage is required for seed embryo and seedling development. In Arabidopsis thaliana (Mouse-ear cress), this protein is Vacuolar iron transporter 1.